The primary structure comprises 817 residues: Putative ATP-dependent RNA helicase R350 (817 aa).

Residues 1-29 (MNRRNRSNDLNPEPSIENPNNQIAEEFPG) are disordered. The segment covering 17–29 (ENPNNQIAEEFPG) has biased composition (polar residues). The region spanning 93–271 (LNPQGPYTSI…ALMFNLLRPG (179 aa)) is the Helicase ATP-binding domain. 106–113 (HGLGSGKT) contributes to the ATP binding site. The DEAH box signature appears at 206 to 209 (DEAH). In terms of domain architecture, Helicase C-terminal spans 495–661 (LAIAFMTYIS…STDEYVEDQA (167 aa)).

It belongs to the DEAD box helicase family. DEAH subfamily.

The protein resides in the virion. It carries out the reaction ATP + H2O = ADP + phosphate + H(+). The protein is Putative ATP-dependent RNA helicase R350 of Acanthamoeba polyphaga mimivirus (APMV).